A 147-amino-acid polypeptide reads, in one-letter code: Cyanate hydratase (147 aa).

Catalysis depends on residues R88, E91, and S114.

Belongs to the cyanase family.

The enzyme catalyses cyanate + hydrogencarbonate + 3 H(+) = NH4(+) + 2 CO2. In terms of biological role, catalyzes the reaction of cyanate with bicarbonate to produce ammonia and carbon dioxide. This Polynucleobacter asymbioticus (strain DSM 18221 / CIP 109841 / QLW-P1DMWA-1) (Polynucleobacter necessarius subsp. asymbioticus) protein is Cyanate hydratase.